Reading from the N-terminus, the 262-residue chain is Small ribosomal subunit protein uS2 (262 aa).

This sequence belongs to the universal ribosomal protein uS2 family.

The protein is Small ribosomal subunit protein uS2 of Roseiflexus sp. (strain RS-1).